The sequence spans 336 residues: Holliday junction branch migration complex subunit RuvB (336 aa).

The tract at residues 4-184 (ADRLISADAI…FGIVQRLEFY (181 aa)) is large ATPase domain (RuvB-L). ATP contacts are provided by residues arginine 24, glycine 65, lysine 68, threonine 69, threonine 70, 131–133 (EDY), arginine 174, tyrosine 184, and arginine 221. Threonine 69 is a Mg(2+) binding site. The interval 185–255 (NVADLQYIVG…VATQALDMLA (71 aa)) is small ATPAse domain (RuvB-S). Residues 258 to 336 (TEGFDYMDRK…HFGLTREDLG (79 aa)) form a head domain (RuvB-H) region. DNA is bound by residues arginine 294, arginine 313, and arginine 318.

Belongs to the RuvB family. As to quaternary structure, homohexamer. Forms an RuvA(8)-RuvB(12)-Holliday junction (HJ) complex. HJ DNA is sandwiched between 2 RuvA tetramers; dsDNA enters through RuvA and exits via RuvB. An RuvB hexamer assembles on each DNA strand where it exits the tetramer. Each RuvB hexamer is contacted by two RuvA subunits (via domain III) on 2 adjacent RuvB subunits; this complex drives branch migration. In the full resolvosome a probable DNA-RuvA(4)-RuvB(12)-RuvC(2) complex forms which resolves the HJ.

The protein localises to the cytoplasm. It catalyses the reaction ATP + H2O = ADP + phosphate + H(+). In terms of biological role, the RuvA-RuvB-RuvC complex processes Holliday junction (HJ) DNA during genetic recombination and DNA repair, while the RuvA-RuvB complex plays an important role in the rescue of blocked DNA replication forks via replication fork reversal (RFR). RuvA specifically binds to HJ cruciform DNA, conferring on it an open structure. The RuvB hexamer acts as an ATP-dependent pump, pulling dsDNA into and through the RuvAB complex. RuvB forms 2 homohexamers on either side of HJ DNA bound by 1 or 2 RuvA tetramers; 4 subunits per hexamer contact DNA at a time. Coordinated motions by a converter formed by DNA-disengaged RuvB subunits stimulates ATP hydrolysis and nucleotide exchange. Immobilization of the converter enables RuvB to convert the ATP-contained energy into a lever motion, pulling 2 nucleotides of DNA out of the RuvA tetramer per ATP hydrolyzed, thus driving DNA branch migration. The RuvB motors rotate together with the DNA substrate, which together with the progressing nucleotide cycle form the mechanistic basis for DNA recombination by continuous HJ branch migration. Branch migration allows RuvC to scan DNA until it finds its consensus sequence, where it cleaves and resolves cruciform DNA. In Pectobacterium carotovorum subsp. carotovorum (strain PC1), this protein is Holliday junction branch migration complex subunit RuvB.